The following is a 495-amino-acid chain: ATP-dependent RNA helicase dbp3 (495 aa).

A compositionally biased stretch (basic and acidic residues) spans 1–14; that stretch reads MAKRELQDKGSTEH. Residues 1 to 49 are disordered; the sequence is MAKRELQDKGSTEHRAKKKSRNEKHTKKAEDSQASAQSSETQYTDPKEP. The span at 15–27 shows a compositional bias: basic residues; sequence RAKKKSRNEKHTK. Residues 97-105 carry the Q motif motif; sequence SFTSPTAIQ. Residues 109–284 enclose the Helicase ATP-binding domain; that stretch reads WPFLFSGRDV…ATFMTSPVTV (176 aa). 122-129 is a binding site for ATP; the sequence is AETGSGKT. Residues 231-234 carry the DEAD box motif; it reads DEAD. The 150-residue stretch at 315-464 folds into the Helicase C-terminal domain; it reads RLVQLLNKYQ…DVPEDLLKFG (150 aa).

The protein belongs to the DEAD box helicase family. DDX5/DBP2 subfamily.

It localises to the nucleus. The protein localises to the nucleolus. It catalyses the reaction ATP + H2O = ADP + phosphate + H(+). Its function is as follows. ATP-dependent RNA helicase required for 60S ribosomal subunit synthesis. Involved in efficient pre-rRNA processing, predominantly at site A3, which is necessary for the normal formation of 25S and 5.8S rRNAs. The polypeptide is ATP-dependent RNA helicase dbp3 (dbp3) (Aspergillus niger (strain ATCC MYA-4892 / CBS 513.88 / FGSC A1513)).